The chain runs to 183 residues: Ferritin heavy chain (183 aa).

M1 carries the N-acetylmethionine modification. T2 carries the post-translational modification N-acetylthreonine; in Ferritin heavy chain, N-terminally processed. The Ferritin-like diiron domain maps to 11–160; sequence QNYHQDSEAA…DHVTNLRKMG (150 aa). Fe cation-binding residues include E28, E63, H66, E108, and Q142. Phosphoserine is present on residues S179 and S183.

This sequence belongs to the ferritin family. Oligomer of 24 subunits. There are two types of subunits: L (light) chain and H (heavy) chain. The major chain can be light or heavy, depending on the species and tissue type. The functional molecule forms a roughly spherical shell with a diameter of 12 nm and contains a central cavity into which the insoluble mineral iron core is deposited. Interacts with NCOA4; NCOA4 promotes targeting of the iron-binding ferritin complex to autolysosomes following starvation or iron depletion.

It is found in the cytoplasm. Its subcellular location is the lysosome. The protein resides in the cytoplasmic vesicle. It localises to the autophagosome. The catalysed reaction is 4 Fe(2+) + O2 + 4 H(+) = 4 Fe(3+) + 2 H2O. In terms of biological role, stores iron in a soluble, non-toxic, readily available form. Important for iron homeostasis. Has ferroxidase activity. Iron is taken up in the ferrous form and deposited as ferric hydroxides after oxidation. Also plays a role in delivery of iron to cells. Mediates iron uptake in capsule cells of the developing kidney. Delivery to lysosomes is mediated by the cargo receptor NCOA4 for autophagic degradation and release of iron. In Felis catus (Cat), this protein is Ferritin heavy chain (FTH1).